A 616-amino-acid polypeptide reads, in one-letter code: Dihydroxy-acid dehydratase (616 aa).

D81 contributes to the Mg(2+) binding site. C122 is a binding site for [2Fe-2S] cluster. Residues D123 and K124 each coordinate Mg(2+). N6-carboxylysine is present on K124. C196 contacts [2Fe-2S] cluster. E496 contributes to the Mg(2+) binding site. The Proton acceptor role is filled by S522.

Belongs to the IlvD/Edd family. As to quaternary structure, homodimer. The cofactor is [2Fe-2S] cluster. It depends on Mg(2+) as a cofactor.

It carries out the reaction (2R)-2,3-dihydroxy-3-methylbutanoate = 3-methyl-2-oxobutanoate + H2O. The catalysed reaction is (2R,3R)-2,3-dihydroxy-3-methylpentanoate = (S)-3-methyl-2-oxopentanoate + H2O. It participates in amino-acid biosynthesis; L-isoleucine biosynthesis; L-isoleucine from 2-oxobutanoate: step 3/4. Its pathway is amino-acid biosynthesis; L-valine biosynthesis; L-valine from pyruvate: step 3/4. In terms of biological role, functions in the biosynthesis of branched-chain amino acids. Catalyzes the dehydration of (2R,3R)-2,3-dihydroxy-3-methylpentanoate (2,3-dihydroxy-3-methylvalerate) into 2-oxo-3-methylpentanoate (2-oxo-3-methylvalerate) and of (2R)-2,3-dihydroxy-3-methylbutanoate (2,3-dihydroxyisovalerate) into 2-oxo-3-methylbutanoate (2-oxoisovalerate), the penultimate precursor to L-isoleucine and L-valine, respectively. This Streptomyces griseus subsp. griseus (strain JCM 4626 / CBS 651.72 / NBRC 13350 / KCC S-0626 / ISP 5235) protein is Dihydroxy-acid dehydratase.